The following is an 874-amino-acid chain: Alanine--tRNA ligase (874 aa).

Positions 564, 568, 665, and 669 each coordinate Zn(2+).

The protein belongs to the class-II aminoacyl-tRNA synthetase family. Zn(2+) serves as cofactor.

The protein resides in the cytoplasm. The enzyme catalyses tRNA(Ala) + L-alanine + ATP = L-alanyl-tRNA(Ala) + AMP + diphosphate. Functionally, catalyzes the attachment of alanine to tRNA(Ala) in a two-step reaction: alanine is first activated by ATP to form Ala-AMP and then transferred to the acceptor end of tRNA(Ala). Also edits incorrectly charged Ser-tRNA(Ala) and Gly-tRNA(Ala) via its editing domain. The protein is Alanine--tRNA ligase of Acidovorax sp. (strain JS42).